Reading from the N-terminus, the 259-residue chain is Leucine-rich repeat-containing protein 61 (259 aa).

3 LRR repeats span residues 54-75 (NLEW…ASLR), 76-97 (QLAV…AACE), and 98-119 (NLQS…QCLA). The LRRCT domain maps to 138–178 (NPLCANASYWAVVRELLPGLKVIDGERVSGRGSELYQLCRD).

The polypeptide is Leucine-rich repeat-containing protein 61 (Lrrc61) (Mus musculus (Mouse)).